The primary structure comprises 146 residues: UPF0260 protein Swit_2819 (146 aa).

Belongs to the UPF0260 family.

The sequence is that of UPF0260 protein Swit_2819 from Rhizorhabdus wittichii (strain DSM 6014 / CCUG 31198 / JCM 15750 / NBRC 105917 / EY 4224 / RW1) (Sphingomonas wittichii).